The sequence spans 546 residues: Probable malate:quinone oxidoreductase (546 aa).

This sequence belongs to the MQO family. It depends on FAD as a cofactor.

It carries out the reaction (S)-malate + a quinone = a quinol + oxaloacetate. It participates in carbohydrate metabolism; tricarboxylic acid cycle; oxaloacetate from (S)-malate (quinone route): step 1/1. This chain is Probable malate:quinone oxidoreductase, found in Acinetobacter baumannii (strain ACICU).